Reading from the N-terminus, the 372-residue chain is 3-galactosyl-N-acetylglucosaminide 4-alpha-L-fucosyltransferase FUT3 (372 aa).

Residues 1 to 15 (MDPLGAAKPQWPWRR) are Cytoplasmic-facing. A helical; Signal-anchor for type II membrane protein transmembrane segment spans residues 16–34 (CLAALLFQLLVAVCFFSYL). Topologically, residues 35–372 (RVSRDDATGS…TMRSIAAWFT (338 aa)) are lumenal. Positions 40–69 (DATGSPRPGLMAVEPVTGAPSGSSRQDTTP) are disordered. Residues asparagine 165 and asparagine 196 are each glycosylated (N-linked (GlcNAc...) asparagine).

Belongs to the glycosyltransferase 10 family. Glycosylated.

It is found in the golgi apparatus. The protein resides in the golgi stack membrane. It carries out the reaction a beta-D-galactosyl-(1-&gt;3)-N-acetyl-beta-D-glucosaminyl derivative + GDP-beta-L-fucose = a beta-D-galactosyl-(1-&gt;3)-[alpha-L-fucosyl-(1-&gt;4)]-N-acetyl-beta-D-glucosaminyl derivative + GDP + H(+). The enzyme catalyses an N-acetyl-alpha-neuraminyl-(2-&gt;3)-beta-D-galactosyl-(1-&gt;4)-N-acetyl-beta-D-glucosaminyl derivative + GDP-beta-L-fucose = an alpha-Neu5Ac-(2-&gt;3)-beta-D-Gal-(1-&gt;4)-[alpha-L-Fuc-(1-&gt;3)]-beta-D-GlcNAc derivative + GDP + H(+). It catalyses the reaction a beta-D-galactosyl-(1-&gt;4)-N-acetyl-beta-D-glucosaminyl derivative + GDP-beta-L-fucose = a beta-D-galactosyl-(1-&gt;4)-[alpha-L-fucosyl-(1-&gt;3)]-N-acetyl-beta-D-glucosaminyl derivative + GDP + H(+). The catalysed reaction is an alpha-Neu5Ac-(2-&gt;3)-beta-D-Gal-(1-&gt;4)-beta-D-GlcNAc-(1-&gt;3)-beta-D-Gal-(1-&gt;4)-[alpha-L-Fuc-(1-&gt;3)]-beta-D-GlcNAc derivative + GDP-beta-L-fucose = an alpha-Neu5Ac-(2-&gt;3)-beta-D-Gal-(1-&gt;4)-[alpha-L-Fuc-(1-&gt;3)]-beta-D-GlcNAc-(1-&gt;3)-beta-D-Gal-(1-&gt;4)-[alpha-L-Fuc-(1-&gt;3)]-beta-D-GlcNAc derivative + GDP + H(+). It carries out the reaction Lc4Cer + GDP-beta-L-fucose = a lactoside III(4)-a-Fuc-Lc4Cer + GDP + H(+). The enzyme catalyses a beta-D-Gal-(1-&gt;3)-beta-D-GlcNAc-(1-&gt;3)-beta-D-Gal-(1-&gt;4)-beta-D-Glc-(1&lt;-&gt;1')-Cer(d18:1(4E)) + GDP-beta-L-fucose = a III(4)-a-Fuc-Lc4Cer(d18:1(4E)) + GDP + H(+). It catalyses the reaction N-acetyl-alpha-neuraminosyl-(2-&gt;3)-beta-D-galactosyl-(1-&gt;3)-[N-acetyl-alpha-neuraminosyl-(2-&gt;6)]-N-acetyl-beta-D-glucosaminyl-(1-&gt;3)-beta-D-galactosyl-(1-&gt;4)-beta-D-glucosyl-(1&lt;-&gt;1')-N-acyl-sphing-4-enine + GDP-beta-L-fucose = N-acetyl-alpha-neuraminosyl-(2-&gt;3)-beta-D-galactosyl-(1-&gt;3)-alpha-L-fucosyl-(1-&gt;4)-[N-acetyl-alpha-neuraminosyl-(2-&gt;6)-N-acetyl-beta-D-glucosaminyl-(1-&gt;3)]-beta-D-galactosyl-(1-&gt;4)-beta-D-glucosyl-(1&lt;-&gt;1')-N-acyl-sphing-4-enine + GDP + H(+). The catalysed reaction is N-acetyl-alpha-neuraminosyl-(2-&gt;3)-beta-D-galactosyl-(1-&gt;3)-N-acetyl-beta-D-glucosaminyl-(1-&gt;3)-beta-D-galactosyl-(1-&gt;4)-beta-D-glucosyl-(1&lt;-&gt;1')-N-acyl-sphing-4-enine + GDP-beta-L-fucose = N-acetyl-alpha-neuraminosyl-(2-&gt;3)-beta-D-galactosyl-(1-&gt;3)-alpha-L-fucosyl-(1-&gt;4)-[N-acetyl-beta-D-glucosaminyl-(1-&gt;3)]-beta-D-galactosyl-(1-&gt;4)-beta-D-glucosyl-(1&lt;-&gt;1')-N-acyl-sphing-4-enine + GDP + H(+). It carries out the reaction beta-D-galactosyl-(1-&gt;3)-N-acetyl-D-glucosamine + GDP-beta-L-fucose = beta-D-galactosyl-(1-&gt;3)-[alpha-L-fucosyl-(1-&gt;4)]-N-acetyl-D-glucosamine + GDP + H(+). The enzyme catalyses alpha-L-Fuc-(1-&gt;2)-beta-D-Gal-(1-&gt;3)-D-GlcNAc + GDP-beta-L-fucose = alpha-L-Fuc-(1-&gt;2)-beta-D-Gal-(1-&gt;3)-[alpha-L-Fuc-(1-&gt;4)]-D-GlcNAc + GDP + H(+). It catalyses the reaction alpha-L-Fuc-(1-&gt;2)-beta-D-Gal-(1-&gt;4)-D-GlcNAc + GDP-beta-L-fucose = alpha-L-Fuc-(1-&gt;2)-beta-D-Gal-(1-&gt;4)-[alpha-L-Fuc-(1-&gt;3)]-D-GlcNAc + GDP + H(+). The catalysed reaction is beta-D-galactosyl-(1-&gt;4)-N-acetyl-D-glucosamine + GDP-beta-L-fucose = beta-D-galactosyl-(1-&gt;4)-[alpha-L-fucosyl-(1-&gt;3)]-N-acetyl-D-glucosamine + GDP + H(+). It carries out the reaction lactose + GDP-beta-L-fucose = beta-D-galactosyl-(1-&gt;4)-[alpha-L-fucosyl-(1-&gt;3)]-D-glucose + GDP + H(+). The enzyme catalyses an alpha-Neu5Ac-(2-&gt;3)-beta-D-Gal-(1-&gt;3)-D-GlcNAc derivative + GDP-beta-L-fucose = an alpha-Neu5Ac-(2-&gt;3)-beta-D-Gal-(1-&gt;3)-[alpha-L-Fuc-(1-&gt;4)]-beta-D-GlcNAc derivative + GDP + H(+). Its pathway is protein modification; protein glycosylation. Functionally, catalyzes the transfer of L-fucose, from a guanosine diphosphate-beta-L-fucose, to both the subterminal N-acetyl glucosamine (GlcNAc) of type 1 chain (beta-D-Gal-(1-&gt;3)-beta-D-GlcNAc) glycolipids and oligosaccharides via an alpha(1,4) linkage, and the subterminal glucose (Glc) or GlcNAc of type 2 chain (beta-D-Gal-(1-&gt;4)-beta-D-GlcNAc) oligosaccharides via an alpha(1,3) linkage, independently of the presence of terminal alpha-L-fucosyl-(1,2) moieties on the terminal galactose of these acceptors and participates in the blood groups Lewis determination and expression of Lewis a (Le(a)), lewis b (Le(b)), Lewis x/SSEA-1 (Le(x)) and lewis y (Le(y)) antigens. Also catalyzes the transfer of L-fucose to subterminal GlcNAc of sialyl- and disialyl-lactotetraosylceramide to produce sialyl Lewis a (sLe(a)) and disialyl Lewis a via an alpha(1,4) linkage and therefore may regulate cell surface sialyl Lewis a expression and consequently regulates adhesive properties to E-selectin, cell proliferation and migration. Catalyzes the transfer of an L-fucose to 3'-sialyl-N-acetyllactosamine by an alpha(1,3) linkage, which allows the formation of sialyl-Lewis x structure and therefore may regulate the sialyl-Lewis x surface antigen expression and consequently adhesive properties to E-selectin. Prefers type 1 chain over type 2 acceptors. Type 1 tetrasaccharide is a better acceptor than type 1 disaccharide suggesting that a beta anomeric configuration of GlcNAc in the substrate is preferred. Lewis-positive (Le(+)) individuals have an active enzyme while Lewis-negative (Le(-)) individuals have an inactive enzyme. The polypeptide is 3-galactosyl-N-acetylglucosaminide 4-alpha-L-fucosyltransferase FUT3 (Pan troglodytes (Chimpanzee)).